The chain runs to 670 residues: DNA ligase (670 aa).

Residues 34–38, 83–84, and E117 contribute to the NAD(+) site; these read DAEYD and SL. K119 acts as the N6-AMP-lysine intermediate in catalysis. R140, E177, K293, and K317 together coordinate NAD(+). Zn(2+) contacts are provided by C411, C414, C429, and C434. The region spanning 591–670 is the BRCT domain; it reads KVGGRFTGKT…DEFLAMLEEG (80 aa).

The protein belongs to the NAD-dependent DNA ligase family. LigA subfamily. Mg(2+) is required as a cofactor. The cofactor is Mn(2+).

The catalysed reaction is NAD(+) + (deoxyribonucleotide)n-3'-hydroxyl + 5'-phospho-(deoxyribonucleotide)m = (deoxyribonucleotide)n+m + AMP + beta-nicotinamide D-nucleotide.. Functionally, DNA ligase that catalyzes the formation of phosphodiester linkages between 5'-phosphoryl and 3'-hydroxyl groups in double-stranded DNA using NAD as a coenzyme and as the energy source for the reaction. It is essential for DNA replication and repair of damaged DNA. The protein is DNA ligase of Geobacter sulfurreducens (strain ATCC 51573 / DSM 12127 / PCA).